A 437-amino-acid polypeptide reads, in one-letter code: Protein translocase subunit SecY (437 aa).

The next 10 membrane-spanning stretches (helical) occupy residues 23-43, 77-97, 125-145, 154-174, 183-203, 217-237, 271-291, 315-335, 367-387, and 395-415; these read IVFL…PIPG, IFAL…LLTL, LILA…IAGI, FYFY…LMWL, IGNG…PSAI, ILLF…VVFM, MAGV…ATII, YLIL…GLVF, IMLR…LIPE, and VPFY…IDFI.

Belongs to the SecY/SEC61-alpha family. As to quaternary structure, component of the Sec protein translocase complex. Heterotrimer consisting of SecY, SecE and SecG subunits. The heterotrimers can form oligomers, although 1 heterotrimer is thought to be able to translocate proteins. Interacts with the ribosome. Interacts with SecDF, and other proteins may be involved. Interacts with SecA.

It is found in the cell membrane. In terms of biological role, the central subunit of the protein translocation channel SecYEG. Consists of two halves formed by TMs 1-5 and 6-10. These two domains form a lateral gate at the front which open onto the bilayer between TMs 2 and 7, and are clamped together by SecE at the back. The channel is closed by both a pore ring composed of hydrophobic SecY resides and a short helix (helix 2A) on the extracellular side of the membrane which forms a plug. The plug probably moves laterally to allow the channel to open. The ring and the pore may move independently. This chain is Protein translocase subunit SecY, found in Buchnera aphidicola subsp. Acyrthosiphon pisum (strain APS) (Acyrthosiphon pisum symbiotic bacterium).